A 351-amino-acid polypeptide reads, in one-letter code: Hydroxymethylglutaryl-CoA synthase (351 aa).

Aspartate 30 is a binding site for (3S)-3-hydroxy-3-methylglutaryl-CoA. Glutamate 82 functions as the Proton donor/acceptor in the catalytic mechanism. Cysteine 114, serine 155, threonine 203, and histidine 236 together coordinate (3S)-3-hydroxy-3-methylglutaryl-CoA. Catalysis depends on cysteine 114, which acts as the Acyl-thioester intermediate. Histidine 236 functions as the Proton donor/acceptor in the catalytic mechanism. Residue arginine 241 participates in CoA binding. Positions 245, 268, and 298 each coordinate (3S)-3-hydroxy-3-methylglutaryl-CoA.

Belongs to the thiolase-like superfamily. Archaeal HMG-CoA synthase family. In terms of assembly, interacts with acetoacetyl-CoA thiolase that catalyzes the precedent step in the pathway and with a DUF35 protein. The acetoacetyl-CoA thiolase/HMG-CoA synthase complex channels the intermediate via a fused CoA-binding site, which allows for efficient coupling of the endergonic thiolase reaction with the exergonic HMGCS reaction.

The catalysed reaction is acetoacetyl-CoA + acetyl-CoA + H2O = (3S)-3-hydroxy-3-methylglutaryl-CoA + CoA + H(+). The protein operates within metabolic intermediate biosynthesis; (R)-mevalonate biosynthesis; (R)-mevalonate from acetyl-CoA: step 2/3. Functionally, catalyzes the condensation of acetyl-CoA with acetoacetyl-CoA to form 3-hydroxy-3-methylglutaryl-CoA (HMG-CoA). Functions in the mevalonate (MVA) pathway leading to isopentenyl diphosphate (IPP), a key precursor for the biosynthesis of isoprenoid compounds that are building blocks of archaeal membrane lipids. This is Hydroxymethylglutaryl-CoA synthase from Pyrobaculum neutrophilum (strain DSM 2338 / JCM 9278 / NBRC 100436 / V24Sta) (Thermoproteus neutrophilus).